Reading from the N-terminus, the 248-residue chain is Triosephosphate isomerase (248 aa).

Residue Asn-9–Lys-11 coordinates substrate. Residue His-94 is the Electrophile of the active site. Catalysis depends on Glu-166, which acts as the Proton acceptor. Substrate-binding positions include Gly-172, Ser-212, and Gly-233–Gly-234.

Belongs to the triosephosphate isomerase family. In terms of assembly, homodimer.

The protein localises to the cytoplasm. It carries out the reaction D-glyceraldehyde 3-phosphate = dihydroxyacetone phosphate. It participates in carbohydrate biosynthesis; gluconeogenesis. Its pathway is carbohydrate degradation; glycolysis; D-glyceraldehyde 3-phosphate from glycerone phosphate: step 1/1. Functionally, involved in the gluconeogenesis. Catalyzes stereospecifically the conversion of dihydroxyacetone phosphate (DHAP) to D-glyceraldehyde-3-phosphate (G3P). The sequence is that of Triosephosphate isomerase from Clostridium botulinum (strain Okra / Type B1).